Reading from the N-terminus, the 924-residue chain is Isoleucine--tRNA ligase (924 aa).

The 'HIGH' region motif lies at 57 to 67 (PYANGDIHMGH). Residue glutamate 552 coordinates L-isoleucyl-5'-AMP. The 'KMSKS' region signature appears at 593 to 597 (KMSKS). Lysine 596 serves as a coordination point for ATP. The Zn(2+) site is built by cysteine 891, cysteine 894, cysteine 911, and cysteine 914.

It belongs to the class-I aminoacyl-tRNA synthetase family. IleS type 1 subfamily. As to quaternary structure, monomer. It depends on Zn(2+) as a cofactor.

The protein resides in the cytoplasm. It carries out the reaction tRNA(Ile) + L-isoleucine + ATP = L-isoleucyl-tRNA(Ile) + AMP + diphosphate. In terms of biological role, catalyzes the attachment of isoleucine to tRNA(Ile). As IleRS can inadvertently accommodate and process structurally similar amino acids such as valine, to avoid such errors it has two additional distinct tRNA(Ile)-dependent editing activities. One activity is designated as 'pretransfer' editing and involves the hydrolysis of activated Val-AMP. The other activity is designated 'posttransfer' editing and involves deacylation of mischarged Val-tRNA(Ile). The chain is Isoleucine--tRNA ligase from Geobacillus kaustophilus (strain HTA426).